The chain runs to 227 residues: Large ribosomal subunit protein uL3 (227 aa).

The disordered stretch occupies residues 144–166 (RRGPMAHGSKNHRLPGSTGPGTT).

Belongs to the universal ribosomal protein uL3 family. As to quaternary structure, part of the 50S ribosomal subunit. Forms a cluster with proteins L14 and L19.

One of the primary rRNA binding proteins, it binds directly near the 3'-end of the 23S rRNA, where it nucleates assembly of the 50S subunit. The sequence is that of Large ribosomal subunit protein uL3 from Trichodesmium erythraeum (strain IMS101).